We begin with the raw amino-acid sequence, 247 residues long: TLC domain-containing protein 1 (247 aa).

The N-terminal stretch at 1-27 (MPLLFHPAWPLLLGATLTFRALRRVLC) is a signal peptide. At 28 to 46 (RLPQPAHVQTDPLRTWRWH) the chain is on the extracellular side. Residues 40-234 (LRTWRWHNLL…LLRSDFCPER (195 aa)) enclose the TLC domain. The helical transmembrane segment at 47 to 67 (NLLVSFTHSIVSGIWALLCLW) threads the bilayer. Residues 68 to 83 (QTPEMLVEIETAWSAS) are Cytoplasmic-facing. The chain crosses the membrane as a helical span at residues 84–104 (GYLLVCFSAGYFIHDTVDIVV). The Extracellular segment spans residues 105–123 (SKQTRASWEYLVHHVMAMG). Positions 124–144 (AFFSGIFWKRFVGGGVLTLLV) form an intramembrane region, helical. Residues 145-173 (EVSNIFLTLRMMMKINNAQDLLLYKVNKY) lie on the Extracellular side of the membrane. The helical transmembrane segment at 174 to 194 (INLVMYFLFRLAPQAYLTKFF) threads the bilayer. Residues 195–201 (LQYAGQR) lie on the Cytoplasmic side of the membrane. A helical transmembrane segment spans residues 202–222 (TLGTFLLAILLMLDLMIIIYF). Over 223 to 247 (SRLLRSDFCPERAPRRQQKDKFLTE) the chain is Extracellular.

It localises to the cell membrane. Its function is as follows. Regulates the composition and fluidity of the plasma membrane. Inhibits the incorporation of membrane-fluidizing phospholipids containing omega-3 long-chain polyunsaturated fatty acids (LCPUFA) and thereby promotes membrane rigidity. Does not appear to have any effect on LCPUFA synthesis. This Mus musculus (Mouse) protein is TLC domain-containing protein 1 (Tlcd1).